The sequence spans 126 residues: Fluoride-specific ion channel FluC (126 aa).

Transmembrane regions (helical) follow at residues 3–23, 36–56, 68–88, and 99–119; these read PLGF…RWGL, YGTL…VGFF, LLAI…SSEA, and WALL…ALGL. Residues glycine 76 and threonine 79 each coordinate Na(+).

This sequence belongs to the fluoride channel Fluc/FEX (TC 1.A.43) family.

The protein resides in the cell inner membrane. The catalysed reaction is fluoride(in) = fluoride(out). With respect to regulation, na(+) is not transported, but it plays an essential structural role and its presence is essential for fluoride channel function. Functionally, fluoride-specific ion channel. Important for reducing fluoride concentration in the cell, thus reducing its toxicity. This Cupriavidus pinatubonensis (strain JMP 134 / LMG 1197) (Cupriavidus necator (strain JMP 134)) protein is Fluoride-specific ion channel FluC.